The chain runs to 267 residues: MKVGIDAGGTLIKIVQEQDNQRTFKTELTKNIDQVVEWLNQQQIEKLCLTGGNAGVIAENINIPAQIFVEFDAASQGLGILLKEQGHDLADYIFANVGTGTSLHYFDGQSQRRVGGIGTGGGMIQGLGYLLSQITDYKQLTDMAQHGDRNTIDLKVRHIYKDTEPPIPGDLTAANFGHVLHHLDADFTPSNKLAAVIGVVGEVVTTMAITVAREFKTENIVYIGSSFHNNALLRKVVEDYTVLRGCKPYYVENGAFSGAIGALYLGK.

Position 6–13 (6–13 (DAGGTLIK)) interacts with ATP. The active-site Proton acceptor is Glu-70. Residues Thr-99, 121 to 125 (GGMIQ), Tyr-137, and Ser-225 each bind ATP.

The protein belongs to the type II pantothenate kinase family. In terms of assembly, homodimer.

The protein resides in the cytoplasm. It carries out the reaction (R)-pantothenate + ATP = (R)-4'-phosphopantothenate + ADP + H(+). Its pathway is cofactor biosynthesis; coenzyme A biosynthesis; CoA from (R)-pantothenate: step 1/5. In terms of biological role, catalyzes the phosphorylation of pantothenate (Pan), the first step in CoA biosynthesis. This is Type II pantothenate kinase from Staphylococcus aureus (strain Mu50 / ATCC 700699).